Reading from the N-terminus, the 328-residue chain is Ribosomal RNA small subunit methyltransferase H (328 aa).

Residues 37–39, Asp57, Phe83, Asp104, and Gln111 contribute to the S-adenosyl-L-methionine site; that span reads GGH.

The protein belongs to the methyltransferase superfamily. RsmH family.

The protein resides in the cytoplasm. It carries out the reaction cytidine(1402) in 16S rRNA + S-adenosyl-L-methionine = N(4)-methylcytidine(1402) in 16S rRNA + S-adenosyl-L-homocysteine + H(+). In terms of biological role, specifically methylates the N4 position of cytidine in position 1402 (C1402) of 16S rRNA. This chain is Ribosomal RNA small subunit methyltransferase H, found in Neisseria meningitidis serogroup A / serotype 4A (strain DSM 15465 / Z2491).